The sequence spans 126 residues: Thiocyanate hydrolase subunit alpha (126 aa).

As to quaternary structure, heterododecamer consisting of 4 alpha, 4 beta, and 4 gamma subunits.

It catalyses the reaction thiocyanate + H2O + 2 H(+) = carbonyl sulfide + NH4(+). It participates in organosulfur degradation; thiocyanate degradation. Its function is as follows. Involved in the degradation of thiocyanate. In Thiobacillus thioparus, this protein is Thiocyanate hydrolase subunit alpha (scnA).